We begin with the raw amino-acid sequence, 113 residues long: Hydrogenase maturation factor HypA (113 aa).

Residue H2 coordinates Ni(2+). Positions 73, 76, 89, and 92 each coordinate Zn(2+).

It belongs to the HypA/HybF family.

Functionally, involved in the maturation of [NiFe] hydrogenases. Required for nickel insertion into the metal center of the hydrogenase. In Cereibacter sphaeroides (strain KD131 / KCTC 12085) (Rhodobacter sphaeroides), this protein is Hydrogenase maturation factor HypA.